The chain runs to 237 residues: Concanavalin-A (237 aa).

Mn(2+) is bound by residues E8 and D10. Positions 10, 12, 14, and 19 each coordinate Ca(2+). N14 contacts a carbohydrate. Mn(2+) is bound by residues D19 and H24. A carbohydrate contacts are provided by residues 98-100 (GLY), D208, and R228.

This sequence belongs to the leguminous lectin family. Homotetramer. Post-translationally, concanavalin A-like lectins of the Diocleinae subtribe undergo proteolytic processing referred to as circular permutation. The propeptide is split into an N-terminal and a C-terminal part, the gamma and beta chain, respectively. These are then religated in beta-gamma order to form the mature alpha chain. The beta and gamma chains can often be detected in cell extracts. Residues 1-118 of the mature chain, as displayed here, probably constitute the beta chain in the propeptide, residues 119-237 the gamma chain.

In terms of biological role, glucose/D-mannose specific lectin. The protein is Concanavalin-A of Canavalia cathartica (Jackbean).